A 204-amino-acid chain; its full sequence is NADH-quinone oxidoreductase subunit C (204 aa).

The protein belongs to the complex I 30 kDa subunit family. As to quaternary structure, NDH-1 is composed of 14 different subunits. Subunits NuoB, C, D, E, F, and G constitute the peripheral sector of the complex.

It is found in the cell inner membrane. The catalysed reaction is a quinone + NADH + 5 H(+)(in) = a quinol + NAD(+) + 4 H(+)(out). NDH-1 shuttles electrons from NADH, via FMN and iron-sulfur (Fe-S) centers, to quinones in the respiratory chain. The immediate electron acceptor for the enzyme in this species is believed to be ubiquinone. Couples the redox reaction to proton translocation (for every two electrons transferred, four hydrogen ions are translocated across the cytoplasmic membrane), and thus conserves the redox energy in a proton gradient. The sequence is that of NADH-quinone oxidoreductase subunit C from Vesicomyosocius okutanii subsp. Calyptogena okutanii (strain HA).